The primary structure comprises 356 residues: DNA polymerase IV (356 aa).

In terms of domain architecture, UmuC spans isoleucine 7 to glycine 188. Mg(2+)-binding residues include aspartate 11 and aspartate 106. Residue glutamate 107 is part of the active site.

Belongs to the DNA polymerase type-Y family. In terms of assembly, monomer. It depends on Mg(2+) as a cofactor.

The protein localises to the cytoplasm. The catalysed reaction is DNA(n) + a 2'-deoxyribonucleoside 5'-triphosphate = DNA(n+1) + diphosphate. Poorly processive, error-prone DNA polymerase involved in untargeted mutagenesis. Copies undamaged DNA at stalled replication forks, which arise in vivo from mismatched or misaligned primer ends. These misaligned primers can be extended by PolIV. Exhibits no 3'-5' exonuclease (proofreading) activity. May be involved in translesional synthesis, in conjunction with the beta clamp from PolIII. This is DNA polymerase IV from Actinobacillus pleuropneumoniae serotype 3 (strain JL03).